Here is a 243-residue protein sequence, read N- to C-terminus: tRNA (guanine-N(1)-)-methyltransferase (243 aa).

Residues G112 and L131–L136 each bind S-adenosyl-L-methionine.

It belongs to the RNA methyltransferase TrmD family. As to quaternary structure, homodimer.

Its subcellular location is the cytoplasm. The catalysed reaction is guanosine(37) in tRNA + S-adenosyl-L-methionine = N(1)-methylguanosine(37) in tRNA + S-adenosyl-L-homocysteine + H(+). Functionally, specifically methylates guanosine-37 in various tRNAs. The protein is tRNA (guanine-N(1)-)-methyltransferase of Leuconostoc mesenteroides subsp. mesenteroides (strain ATCC 8293 / DSM 20343 / BCRC 11652 / CCM 1803 / JCM 6124 / NCDO 523 / NBRC 100496 / NCIMB 8023 / NCTC 12954 / NRRL B-1118 / 37Y).